The primary structure comprises 1872 residues: Fatty acid synthase beta subunit pkiC (1872 aa).

Positions 174–425 (VFGGQGECSR…DQSRIPFRDR (252 aa)) are acetyltransferase (AT) domain. An enoyl reductase (ER) domain region spans residues 591–836 (NRVLGAPPIM…IIAATPGVSD (246 aa)). A disordered region spans residues 1111–1132 (TTPASWSTLSLTERDTSEETSD). The interval 1158 to 1597 (PSHPLWMRAL…MPLEKLVVEI (440 aa)) is dehydratase (DH) domain. Positions 1518–1617 (PPSNEPYAQL…CFSILAKRKE (100 aa)) constitute a MaoC-like domain.

It belongs to the fungal fatty acid synthetase subunit beta family. As to quaternary structure, [Alpha(6)beta(6)] hexamers of two multifunctional subunits (alpha and beta).

It carries out the reaction acetyl-CoA + n malonyl-CoA + 2n NADPH + 4n H(+) = a long-chain-acyl-CoA + n CoA + n CO2 + 2n NADP(+).. The catalysed reaction is holo-[ACP] + acetyl-CoA = acetyl-[ACP] + CoA. The enzyme catalyses holo-[ACP] + malonyl-CoA = malonyl-[ACP] + CoA. It catalyses the reaction a (3R)-hydroxyacyl-[ACP] = a (2E)-enoyl-[ACP] + H2O. It carries out the reaction a 2,3-saturated acyl-[ACP] + NAD(+) = a (2E)-enoyl-[ACP] + NADH + H(+). The catalysed reaction is (9Z)-octadecenoyl-[ACP] + H2O = (9Z)-octadecenoate + holo-[ACP] + H(+). It participates in secondary metabolite biosynthesis. Fatty acid synthase beta subunit; part of the pki gene cluster that mediates the biosynthesis of 2,4-dihydroxy-3-methyl-6-(2-oxoundecyl)benzaldehyde. The first step in the pathway is the generation of the decanoyl starter unit by the FAS composed of subunits pkiB and pkiC, which is then transferred directly from the FAS to the SAT domain of the non-reducing polyketide synthase pkiA. PkiA condenses the decanoyyl starter unit with 4 malonyl-CoA units and performs one methylation step to yield 2,4-dihydroxy-3-methyl-6-(2-oxoundecyl)benzaldehyde. This Emericella nidulans (strain FGSC A4 / ATCC 38163 / CBS 112.46 / NRRL 194 / M139) (Aspergillus nidulans) protein is Fatty acid synthase beta subunit pkiC.